Here is a 201-residue protein sequence, read N- to C-terminus: Protein FAR-RED-ELONGATED HYPOCOTYL 1-LIKE (201 aa).

Residues 32-35 (KKRK) carry the Nuclear localization sequence (NLS) motif. Residues 43 to 46 (LLPL) carry the Nuclear export sequence (NES) motif.

This sequence belongs to the FHY1 protein family. Homodimer and heterodimer with FHY1. Interacts with PHYA, especially upon far-red (FR) light illumination. Binds to LAF1 and HFR1. Inactivated by rapid reversible PHYA-mediated phosphorylation.

It localises to the nucleus. It is found in the cytoplasm. In terms of biological role, can activate transcription. Essential for light-regulated PHYA nuclear accumulation and subsequent PHYA phototropic signaling processes. PHYA-specific signal transducer in response to continuous FR lights. Mediates the association of PHYA with HFR1 and LAF1 in the nucleus in response to FR conditions. Contributes to inhibition of hypocotyl elongation in continuous blue light (B). The sequence is that of Protein FAR-RED-ELONGATED HYPOCOTYL 1-LIKE from Arabidopsis thaliana (Mouse-ear cress).